A 724-amino-acid chain; its full sequence is Putative mediator of RNA polymerase II transcription subunit 1 (724 aa).

Disordered stretches follow at residues Ser33 to Asn52, Gln147 to Glu167, and His486 to Gly524. A coiled-coil region spans residues Tyr140–Lys200. 2 stretches are compositionally biased toward low complexity: residues Gln147–Pro164 and Ser488–Gln510. Over residues Lys511–Gly524 the composition is skewed to polar residues.

This sequence belongs to the Mediator complex subunit 1 family. As to quaternary structure, component of the Mediator complex.

It localises to the nucleus. Its function is as follows. Component of the Mediator complex, a coactivator involved in the regulated transcription of nearly all RNA polymerase II-dependent genes. Mediator functions as a bridge to convey information from gene-specific regulatory proteins to the basal RNA polymerase II transcription machinery. Mediator is recruited to promoters by direct interactions with regulatory proteins and serves as a scaffold for the assembly of a functional preinitiation complex with RNA polymerase II and the general transcription factors. In Dictyostelium discoideum (Social amoeba), this protein is Putative mediator of RNA polymerase II transcription subunit 1 (med1).